A 582-amino-acid chain; its full sequence is MKRSMYAGRVREEHIGTTITLKGWVSRRRDLGGLIFIDLRDREGVMQLVINPEEVSSDVMATAERLRSEYVIEVEGFVEARQQANDKLATGMVELKVSALTILNTAKTTPFEIKDDVEVSDDTRLRYRYLDLRRPEMLENFKLRAKVTHSIRNYLDDLEFIDVETPMLTKSTPEGARDYLVPSRVSQGHFYALPQSPQITKQLLMNAGFDRYYQIVKCFRDEDLRGDRQPEFTQVDLETSFLSEQEIQDIVEGMIAKVMKETKEIDVTLPLPRMSYDVAMNSYGSDKPDTRFEMLLQDLTVTVKGIDFKVFSEAPAVKAIVVKGNADRYSRKDIDKLTEFAKQFGAKGLAWVKVTDGQLAGPVAKFLTAIETELSSQLKLAENDLVLFVADTLEVANNTLGALRNRIAKDLDMIDQSQFNFLWVVDWPMFEWSEEEGRYMSAHHPFTLPTPESAHELEGDLAKVRAIAYDIVLNGYELGGGSLRINQKEMQERMFKALGFTADEANDQFGFLLEAMDYGFPPHGGLAIGLDRFVMLLAGKDNIREVIAFPKNNKASDPMTQAPSLVSENQLEELSLQIESHD.

Residue Glu174 participates in L-aspartate binding. An aspartate region spans residues 198 to 201; that stretch reads QITK. Residue Arg220 participates in L-aspartate binding. Residues 220 to 222 and Gln229 each bind ATP; that span reads RDE. His443 is an L-aspartate binding site. Glu477 is an ATP binding site. Residue Arg484 participates in L-aspartate binding. 529–532 contacts ATP; sequence GLDR.

This sequence belongs to the class-II aminoacyl-tRNA synthetase family. Type 1 subfamily. In terms of assembly, homodimer.

The protein resides in the cytoplasm. It carries out the reaction tRNA(Asp) + L-aspartate + ATP = L-aspartyl-tRNA(Asp) + AMP + diphosphate. Its function is as follows. Catalyzes the attachment of L-aspartate to tRNA(Asp) in a two-step reaction: L-aspartate is first activated by ATP to form Asp-AMP and then transferred to the acceptor end of tRNA(Asp). This is Aspartate--tRNA ligase from Streptococcus pyogenes serotype M3 (strain ATCC BAA-595 / MGAS315).